A 922-amino-acid polypeptide reads, in one-letter code: Golgi-associated RAB2 interactor protein 5B (922 aa).

6 disordered regions span residues D244 to H264, Q292 to H317, T373 to S404, A424 to T597, Q758 to S830, and A842 to V869. Polar residues predominate over residues Q292–A305. Residues K431 to K441 show a composition bias toward pro residues. Low complexity-rich tracts occupy residues A442–P458 and K471–V495. The span at P496–Q507 shows a compositional bias: pro residues. Basic and acidic residues predominate over residues Q758 to W788.

This sequence belongs to the GARIN family.

The polypeptide is Golgi-associated RAB2 interactor protein 5B (Homo sapiens (Human)).